A 380-amino-acid chain; its full sequence is Cytochrome b (380 aa).

A run of 4 helical transmembrane segments spans residues 34-54 (FGSLLAVCLATQILTGLLLAM), 78-99 (WLIRNLHANGASFFFICIFLHI), 114-134 (WNTGVILLLTLMATAFVGYVL), and 179-199 (FFALHFLLPFVIAGITVTHLM). Residues histidine 84 and histidine 98 each coordinate heme b. Heme b contacts are provided by histidine 183 and histidine 197. Histidine 202 serves as a coordination point for a ubiquinone. 4 helical membrane-spanning segments follow: residues 227–247 (LKDILGLALMLTPFLTLALFS), 289–309 (LGGVLALAASVLILLLIPFLH), 321–341 (LSQALFWLLVANLLILTWVGS), and 348–368 (FIIIGQMASFSYFTILLSLLP).

Belongs to the cytochrome b family. As to quaternary structure, the cytochrome bc1 complex contains 11 subunits: 3 respiratory subunits (MT-CYB, CYC1 and UQCRFS1), 2 core proteins (UQCRC1 and UQCRC2) and 6 low-molecular weight proteins (UQCRH/QCR6, UQCRB/QCR7, UQCRQ/QCR8, UQCR10/QCR9, UQCR11/QCR10 and a cleavage product of UQCRFS1). This cytochrome bc1 complex then forms a dimer. It depends on heme b as a cofactor.

The protein localises to the mitochondrion inner membrane. In terms of biological role, component of the ubiquinol-cytochrome c reductase complex (complex III or cytochrome b-c1 complex) that is part of the mitochondrial respiratory chain. The b-c1 complex mediates electron transfer from ubiquinol to cytochrome c. Contributes to the generation of a proton gradient across the mitochondrial membrane that is then used for ATP synthesis. The polypeptide is Cytochrome b (MT-CYB) (Crossoptilon crossoptilon (White-eared pheasant)).